The chain runs to 1375 residues: DNA-directed RNA polymerase subunit beta (1375 aa).

This sequence belongs to the RNA polymerase beta chain family. As to quaternary structure, the RNAP catalytic core consists of 2 alpha, 1 beta, 1 beta' and 1 omega subunit. When a sigma factor is associated with the core the holoenzyme is formed, which can initiate transcription.

The enzyme catalyses RNA(n) + a ribonucleoside 5'-triphosphate = RNA(n+1) + diphosphate. Its function is as follows. DNA-dependent RNA polymerase catalyzes the transcription of DNA into RNA using the four ribonucleoside triphosphates as substrates. The polypeptide is DNA-directed RNA polymerase subunit beta (Methylorubrum populi (strain ATCC BAA-705 / NCIMB 13946 / BJ001) (Methylobacterium populi)).